Reading from the N-terminus, the 130-residue chain is Peptidyl-prolyl cis-trans isomerase pin4 (130 aa).

Residues 1–38 (MGKDKKASGSGSGSKGGKDAGNKDAGKDAGKASKGAQS) are disordered. A compositionally biased stretch (basic and acidic residues) spans 16–31 (GGKDAGNKDAGKDAGK). Positions 36 to 128 (AQSINVRHIL…FGYHIIMVEG (93 aa)) constitute a PpiC domain.

Belongs to the PpiC/parvulin rotamase family. PIN4 subfamily.

The catalysed reaction is [protein]-peptidylproline (omega=180) = [protein]-peptidylproline (omega=0). In terms of biological role, PPIases accelerate the folding of proteins. It catalyzes the cis-trans isomerization of proline imidic peptide bonds in oligopeptides. The protein is Peptidyl-prolyl cis-trans isomerase pin4 (ppi-5) of Neurospora crassa (strain ATCC 24698 / 74-OR23-1A / CBS 708.71 / DSM 1257 / FGSC 987).